The sequence spans 138 residues: ATP synthase epsilon chain (138 aa).

The protein belongs to the ATPase epsilon chain family. As to quaternary structure, F-type ATPases have 2 components, CF(1) - the catalytic core - and CF(0) - the membrane proton channel. CF(1) has five subunits: alpha(3), beta(3), gamma(1), delta(1), epsilon(1). CF(0) has three main subunits: a, b and c.

It is found in the cell inner membrane. Functionally, produces ATP from ADP in the presence of a proton gradient across the membrane. The polypeptide is ATP synthase epsilon chain (Citrifermentans bemidjiense (strain ATCC BAA-1014 / DSM 16622 / JCM 12645 / Bem) (Geobacter bemidjiensis)).